Here is a 1486-residue protein sequence, read N- to C-terminus: Chromosome partition protein MukB (1486 aa).

Residue 34–41 (GGNGAGKS) coordinates ATP. Coiled coils occupy residues 326-418 (LEAD…QYNQ), 444-480 (LETFQAKELEATEKMLSLEQKMSMAQTAHSQFEQAYQ), and 509-603 (RHLA…RAPV). Residues 666–783 (PGGSEDQRLN…EVPLFGRAAR (118 aa)) form a flexible hinge region. Coiled-coil stretches lie at residues 835-923 (EAEI…AKLE), 977-1115 (EMLS…TAKA), and 1209-1266 (VEAI…QNVS).

This sequence belongs to the SMC family. MukB subfamily. As to quaternary structure, homodimerization via its hinge domain. Binds to DNA via its C-terminal region. Interacts, and probably forms a ternary complex, with MukE and MukF via its C-terminal region. The complex formation is stimulated by calcium or magnesium. Interacts with tubulin-related protein FtsZ.

Its subcellular location is the cytoplasm. The protein resides in the nucleoid. Plays a central role in chromosome condensation, segregation and cell cycle progression. Functions as a homodimer, which is essential for chromosome partition. Involved in negative DNA supercoiling in vivo, and by this means organize and compact chromosomes. May achieve or facilitate chromosome segregation by condensation DNA from both sides of a centrally located replisome during cell division. The polypeptide is Chromosome partition protein MukB (Shigella boydii serotype 18 (strain CDC 3083-94 / BS512)).